The chain runs to 561 residues: Potassium-transporting ATPase potassium-binding subunit (561 aa).

12 helical membrane passes run 1–21 (MMAS…LLAR), 62–82 (YLLA…LILM), 132–152 (GLTV…FALM), 173–193 (ITLY…VSQG), 253–273 (FVQM…FGDV), 283–303 (LLWS…WAEV), 327–347 (FGIL…CGAV), 356–376 (ALGG…FGGV), 379–399 (GLYG…LMIG), 416–436 (MTAL…ALAM), 483–503 (MLLA…VLAI), and 526–546 (LFIA…FIPA).

Belongs to the KdpA family. In terms of assembly, the system is composed of three essential subunits: KdpA, KdpB and KdpC.

It is found in the cell inner membrane. Part of the high-affinity ATP-driven potassium transport (or Kdp) system, which catalyzes the hydrolysis of ATP coupled with the electrogenic transport of potassium into the cytoplasm. This subunit binds the periplasmic potassium ions and delivers the ions to the membrane domain of KdpB through an intramembrane tunnel. The sequence is that of Potassium-transporting ATPase potassium-binding subunit from Erwinia tasmaniensis (strain DSM 17950 / CFBP 7177 / CIP 109463 / NCPPB 4357 / Et1/99).